A 1019-amino-acid chain; its full sequence is MAKRGYKLQEFVAHSGNVNCLSIGKKTSRLLLTGGDDYKVNLWSIGKTTSPMSLCGHTSPVDSVAFNSEEVLVLAGASSGVIKLWDLEESKMVRAFTGHRSNCSAVEFHPFGEFLASGSSDTNLRVWDTRKKGCIQTYKGHTRGISTIEFSPDGRWVVSGGLDNVVKVWDLTAGKLLHEFKCHEGPIRSLDFHPLEFLLATGSADRTVKFWDLETFELIGTTRPEATGVRAIAFHPDGQTLFCGLDDGLKVYSWEPVICRDGVDMGWSTLGDFCINEGKFIGCSYYRNSVGIWVSDISELEPYGAVSEDKNECMVKRFSVLNDQSERMGSGPRGSVSPDYETREIKNIYVDCGNLNVAQNPGSLKATLPLESGKVATMVSEKQNAAYFGPAGDKYSSTSRDSDSGEESSYSERESIPFSRTKSGMLLRPAHVRKTLAKFEESKQSAVVQSATRKKSGLAVEEEPQTQNAFLSEQNASKPFDAEDSIIKGITNKFEKALSSEPPTDEANRMFLKPPRIHRSSNSKYNDTRRAMSADPATFGKGGMENSGDVEDIPSKTERVLSREKPGDEQKNTEYPSGSRELNPVKIVEGVNVVSGRTRSLVEKFERGEKTTHTEGASTTIEQNNNAVQEDPRKTSRQTGETPVISTRRARSTPARVMPIVLNRDSNVTSDEPPLTQPARTSSFPVMPVILNQASNVTYDEPSVALTQESRTSHARILPVTFNQATNITSEEASVTLRRQRRNSAARVRPVLLSQATSHECPVTSVRPLRTSPARVMPTKLNQSVNMTSDTSHIASMHRVSPTQMLATPTVIDQVADMTLDETHATQIQPACDNMPQKEEPNISDREDDSDITENLMLTHNEFLSTLQSRLTKLQIVRHFWERSDVKGAIGALRKLTDQSVQADVISILTEKIEILTLDMFSQLVPVLTSLLGSRTERPVNVSLDMLLKLVAVFGTVIRSTVSAPRIVGVDLHANERLEICQICSAGLHKIQRILPVLARRGGLITRKAQELNLVLQEP.

WD repeat units follow at residues 13–53 (AHSG…SPMS), 56–95 (GHTS…MVRA), 98–137 (GHRS…CIQT), 140–181 (GHTR…HEFK), 183–221 (HEGP…LIGT), 224–264 (PEAT…DGVD), and 266–303 (GWST…LEPY). The short motif at 114-130 (FLASGSSDTNLRVWDTR) is the DWD box element. Disordered stretches follow at residues 388–424 (FGPA…TKSG), 455–474 (KSGL…LSEQ), 517–581 (IHRS…GSRE), and 607–652 (RGEK…RARS). A compositionally biased stretch (polar residues) spans 465–474 (QTQNAFLSEQ). Basic and acidic residues predominate over residues 553 to 572 (IPSKTERVLSREKPGDEQKN). The span at 614–628 (TEGASTTIEQNNNAV) shows a compositional bias: polar residues.

This sequence belongs to the WD repeat KATNB1 family. As to quaternary structure, component of KTN80-KTN1 complexes composed of a hexamer of KTN1-KTN80 heterodimers that sense microtubule (MT) geometry to confer precise MT severing. Interacts directly with AAA1/KTN1 and KTN80.3, and weakly with KTN80.4. In terms of tissue distribution, expressed at low levels in siliques, flowers, leaves, stems and roots.

Its subcellular location is the cytoplasm. It localises to the cytoskeleton. Functionally, may participate in a complex which severs microtubules in an ATP-dependent manner. Microtubule severing may promote rapid reorganization of cellular microtubule arrays. Confers precision to microtubule (MT) severing by specific targeting of KTN1 to MT cleavage sites such as crossover or branching nucleation sites. Together with other KTN80s, regulates cell elongation by modulating MT organization. The polypeptide is Katanin p80 WD40 repeat-containing subunit B1 homolog KTN80.1 (Arabidopsis thaliana (Mouse-ear cress)).